Reading from the N-terminus, the 340-residue chain is GTP 3',8-cyclase (340 aa).

The Radical SAM core domain maps to 8 to 229 (KLGRPIRDLR…IEQHFEISPV (222 aa)). Arg17 provides a ligand contact to GTP. Cys24 and Cys28 together coordinate [4Fe-4S] cluster. Residue Tyr30 participates in S-adenosyl-L-methionine binding. [4Fe-4S] cluster is bound at residue Cys31. Residue Arg71 participates in GTP binding. Gly75 is an S-adenosyl-L-methionine binding site. Position 102 (Thr102) interacts with GTP. An S-adenosyl-L-methionine-binding site is contributed by Ser126. Lys163 is a GTP binding site. Residue Met197 participates in S-adenosyl-L-methionine binding. Residues Cys261 and Cys264 each contribute to the [4Fe-4S] cluster site. Position 266-268 (266-268 (RAR)) interacts with GTP. Residue Cys278 coordinates [4Fe-4S] cluster.

It belongs to the radical SAM superfamily. MoaA family. As to quaternary structure, monomer and homodimer. [4Fe-4S] cluster is required as a cofactor.

The enzyme catalyses GTP + AH2 + S-adenosyl-L-methionine = (8S)-3',8-cyclo-7,8-dihydroguanosine 5'-triphosphate + 5'-deoxyadenosine + L-methionine + A + H(+). It participates in cofactor biosynthesis; molybdopterin biosynthesis. Catalyzes the cyclization of GTP to (8S)-3',8-cyclo-7,8-dihydroguanosine 5'-triphosphate. In Staphylococcus epidermidis (strain ATCC 35984 / DSM 28319 / BCRC 17069 / CCUG 31568 / BM 3577 / RP62A), this protein is GTP 3',8-cyclase.